Here is a 561-residue protein sequence, read N- to C-terminus: Potassium-transporting ATPase potassium-binding subunit (561 aa).

Helical transmembrane passes span 5-25 (IELF…GTYM), 63-83 (KYAL…YFIL), 103-122 (LAFN…HYAG), 133-153 (IVIV…AAAI), 179-199 (LLPI…PQTF), 255-275 (IEML…GLMI), 281-301 (ALVL…GAVY), 380-400 (AGLQ…GLMV), 418-438 (LIAL…ALTV), 485-505 (IMTG…MLAV), and 531-551 (AIFI…AVIL).

The protein belongs to the KdpA family. In terms of assembly, the system is composed of three essential subunits: KdpA, KdpB and KdpC.

The protein resides in the cell membrane. In terms of biological role, part of the high-affinity ATP-driven potassium transport (or Kdp) system, which catalyzes the hydrolysis of ATP coupled with the electrogenic transport of potassium into the cytoplasm. This subunit binds the extracellular potassium ions and delivers the ions to the membrane domain of KdpB through an intramembrane tunnel. In Caldanaerobacter subterraneus subsp. tengcongensis (strain DSM 15242 / JCM 11007 / NBRC 100824 / MB4) (Thermoanaerobacter tengcongensis), this protein is Potassium-transporting ATPase potassium-binding subunit.